The primary structure comprises 422 residues: Calpain-2 catalytic subunit (422 aa).

A Calpain catalytic domain is found at 1-66 (QKLIRIRNPW…YSRLEICNLT (66 aa)). Asn-8 is an active-site residue. 3 residues coordinate Ca(2+): Glu-14, Asp-21, and Glu-45. A domain III region spans residues 67–236 (PDTLTSDTYK…KKADYQAVDD (170 aa)). A linker region spans residues 237 to 251 (EIEADLEEADVSEDD). The interval 252–422 (IDDGFRRLFA…LISWLCFSVL (171 aa)) is domain IV. Ca(2+) contacts are provided by Ala-264, Asp-267, Glu-269, Glu-274, Asp-307, Asp-309, Thr-311, Lys-313, Glu-318, Asp-337, Asp-339, Ser-341, Thr-343, Glu-348, Asp-380, and Asn-383. 2 EF-hand domains span residues 294–327 (LSIE…TKIQ) and 324–359 (TKIQ…AGFK). Residues 389–422 (VRLETLFKIFKQLDPDNTGMIQLDLISWLCFSVL) enclose the EF-hand 3 domain.

It belongs to the peptidase C2 family. In terms of assembly, forms a heterodimer with a small (regulatory) subunit (CAPNS1). Interacts with CPEB3; this leads to cleavage of CPEB3. The cofactor is Ca(2+). Ubiquitous.

The protein localises to the cytoplasm. It is found in the cell membrane. The enzyme catalyses Broad endopeptidase specificity.. Activated by 200-1000 micromolar concentrations of calcium and inhibited by calpastatin. Calcium-regulated non-lysosomal thiol-protease which catalyzes limited proteolysis of substrates involved in cytoskeletal remodeling and signal transduction. Proteolytically cleaves MYOC at 'Arg-226'. Proteolytically cleaves CPEB3 following neuronal stimulation which abolishes CPEB3 translational repressor activity, leading to translation of CPEB3 target mRNAs. The polypeptide is Calpain-2 catalytic subunit (CAPN2) (Oryctolagus cuniculus (Rabbit)).